The sequence spans 236 residues: Small ribosomal subunit protein uS3 (236 aa).

A KH type-2 domain is found at 39–107; that stretch reads IREFLTEELK…DTSLNIVEVR (69 aa). The tract at residues 214–236 is disordered; it reads ASERRAVEGDNQGSSSNRRRENA.

It belongs to the universal ribosomal protein uS3 family. In terms of assembly, part of the 30S ribosomal subunit. Forms a tight complex with proteins S10 and S14.

In terms of biological role, binds the lower part of the 30S subunit head. Binds mRNA in the 70S ribosome, positioning it for translation. The protein is Small ribosomal subunit protein uS3 of Brucella melitensis biotype 1 (strain ATCC 23456 / CCUG 17765 / NCTC 10094 / 16M).